A 61-amino-acid polypeptide reads, in one-letter code: Small ribosomal subunit protein uS14 (61 aa).

Zn(2+)-binding residues include cysteine 24, cysteine 27, cysteine 40, and cysteine 43.

It belongs to the universal ribosomal protein uS14 family. Zinc-binding uS14 subfamily. In terms of assembly, part of the 30S ribosomal subunit. Contacts proteins S3 and S10. Zn(2+) serves as cofactor.

Its function is as follows. Binds 16S rRNA, required for the assembly of 30S particles and may also be responsible for determining the conformation of the 16S rRNA at the A site. This Parafrankia sp. (strain EAN1pec) protein is Small ribosomal subunit protein uS14.